The sequence spans 353 residues: S-adenosylmethionine:tRNA ribosyltransferase-isomerase (353 aa).

It belongs to the QueA family. Monomer.

It is found in the cytoplasm. The enzyme catalyses 7-aminomethyl-7-carbaguanosine(34) in tRNA + S-adenosyl-L-methionine = epoxyqueuosine(34) in tRNA + adenine + L-methionine + 2 H(+). Its pathway is tRNA modification; tRNA-queuosine biosynthesis. Transfers and isomerizes the ribose moiety from AdoMet to the 7-aminomethyl group of 7-deazaguanine (preQ1-tRNA) to give epoxyqueuosine (oQ-tRNA). The polypeptide is S-adenosylmethionine:tRNA ribosyltransferase-isomerase (Marinomonas sp. (strain MWYL1)).